A 539-amino-acid polypeptide reads, in one-letter code: GMP synthase [glutamine-hydrolyzing] (539 aa).

Residues 4-202 (KILILDFGSQ…VLDIAGAKPD (199 aa)) form the Glutamine amidotransferase type-1 domain. Cysteine 81 acts as the Nucleophile in catalysis. Active-site residues include histidine 176 and glutamate 178. Residues 203 to 395 (WIMRDHIEEA…LGLPAEMVYR (193 aa)) form the GMPS ATP-PPase domain. Residue 230 to 236 (SGGVDSS) coordinates ATP.

Homodimer.

It carries out the reaction XMP + L-glutamine + ATP + H2O = GMP + L-glutamate + AMP + diphosphate + 2 H(+). Its pathway is purine metabolism; GMP biosynthesis; GMP from XMP (L-Gln route): step 1/1. Catalyzes the synthesis of GMP from XMP. The protein is GMP synthase [glutamine-hydrolyzing] of Burkholderia pseudomallei (strain 1106a).